The chain runs to 506 residues: Bone morphogenetic protein 6 (506 aa).

Positions 1–20 are cleaved as a signal peptide; the sequence is MPGLGRRAQWLCWWWGLLCS. Positions 21–367 are excised as a propeptide; that stretch reads CGPPPLRPPL…VSEVHVRTTR (347 aa). Disordered stretches follow at residues 44–64, 87–125, and 139–195; these read AGGS…SGFL, PHRP…RLKS, and KDDE…PLTS. The segment covering 96 to 112 has biased composition (low complexity); sequence LQQPQSPVLPQQQQSQQ. Over residues 140 to 153 the composition is skewed to acidic residues; that stretch reads DDEEDGVSEGEGLE. N-linked (GlcNAc...) asparagine glycans are attached at residues Asn234, Asn262, Asn379, Asn397, and Asn447. The interval 366-397 is disordered; that stretch reads TRSASSRRRQQSRNRSTQSQDVSRGSSASDYN. Positions 386–397 are enriched in polar residues; it reads DVSRGSSASDYN. 3 disulfides stabilise this stretch: Cys405–Cys471, Cys434–Cys503, and Cys438–Cys505.

Belongs to the TGF-beta family. In terms of assembly, interacts with SOSTDC1. Interacts (when glycosylated) with type I receptor ACVR1; the interaction may induce HAMP expression. Interacts with type II receptor ACVR2B. Interacts with Hemojuvelin/HJV. Interacts with ERFE; the interaction inhibits BMP-induced transcription of HAMP. Interacts with BMPR1A/ALK3. Forms heterodimers with BMP2 in vitro; the heterodimer then binds to its receptor BMPR1A /ALK3 and may induce HAMP expression.

Its subcellular location is the secreted. Its function is as follows. Growth factor of the TGF-beta superfamily that plays essential roles in many developmental processes including cartilage and bone formation. Also plays an important role in the regulation of HAMP/hepcidin expression and iron metabolism by acting as a ligand for hemojuvelin/HJV. Also acts to promote expression of HAMP, potentially via the interaction with its receptor BMPR1A/ALK3. Initiates the canonical BMP signaling cascade by associating with type I receptor ACVR1 and type II receptor ACVR2B. In turn, ACVR1 propagates signal by phosphorylating SMAD1/5/8 that travel to the nucleus and act as activators and repressors of transcription of target. Can also signal through non-canonical pathway such as TAZ-Hippo signaling cascade to modulate VEGF signaling by regulating VEGFR2 expression. The chain is Bone morphogenetic protein 6 (Bmp6) from Rattus norvegicus (Rat).